Reading from the N-terminus, the 327-residue chain is Methionyl-tRNA formyltransferase (327 aa).

121–124 (SLLP) provides a ligand contact to (6S)-5,6,7,8-tetrahydrofolate.

It belongs to the Fmt family.

The enzyme catalyses L-methionyl-tRNA(fMet) + (6R)-10-formyltetrahydrofolate = N-formyl-L-methionyl-tRNA(fMet) + (6S)-5,6,7,8-tetrahydrofolate + H(+). Attaches a formyl group to the free amino group of methionyl-tRNA(fMet). The formyl group appears to play a dual role in the initiator identity of N-formylmethionyl-tRNA by promoting its recognition by IF2 and preventing the misappropriation of this tRNA by the elongation apparatus. The polypeptide is Methionyl-tRNA formyltransferase (Burkholderia pseudomallei (strain 668)).